The sequence spans 211 residues: MTKGKIITLEGPDGAGKTSVLEQLVLKLEKDNEQSIVTTREPGGVAISESIRNIILDVNNTEMDFKTELLLYIAARRQHLVEKVLPSLSAGKLVFIDRFIDSSVAYQGEGRGLNKSDIEWLNDFATDGIKPDLTLLFDVPSEIGIARINQNVNREINRLDLEKLEMHQKVRQGYLELAKANPDRIVLIDASKPLDDVVDEAYRVIKERFAH.

11–18 contributes to the ATP binding site; the sequence is GPDGAGKT.

Belongs to the thymidylate kinase family.

It catalyses the reaction dTMP + ATP = dTDP + ADP. Functionally, phosphorylation of dTMP to form dTDP in both de novo and salvage pathways of dTTP synthesis. The polypeptide is Thymidylate kinase (Streptococcus uberis (strain ATCC BAA-854 / 0140J)).